Consider the following 211-residue polypeptide: Protein-L-isoaspartate O-methyltransferase 1 (211 aa).

Ser62 is an active-site residue.

The protein belongs to the methyltransferase superfamily. L-isoaspartyl/D-aspartyl protein methyltransferase family.

The protein resides in the cytoplasm. The catalysed reaction is [protein]-L-isoaspartate + S-adenosyl-L-methionine = [protein]-L-isoaspartate alpha-methyl ester + S-adenosyl-L-homocysteine. Functionally, catalyzes the methyl esterification of L-isoaspartyl residues in peptides and proteins that result from spontaneous decomposition of normal L-aspartyl and L-asparaginyl residues. It plays a role in the repair and/or degradation of damaged proteins. The chain is Protein-L-isoaspartate O-methyltransferase 1 from Shewanella sediminis (strain HAW-EB3).